A 959-amino-acid polypeptide reads, in one-letter code: Translation initiation factor IF-2 (959 aa).

The disordered stretch occupies residues 33–373 (SHASSVEEAD…PVTERKFHEL (341 aa)). The span at 46–60 (IASSFSAGVTKNVQA) shows a compositional bias: polar residues. Basic and acidic residues predominate over residues 63–73 (AKDKQVAEQKA). Low complexity predominate over residues 76-100 (AKATTPQPAASKAAEKPAAATQEAS). Composition is skewed to basic and acidic residues over residues 112–125 (FKAE…EQVA), 134–143 (SNDRKSDYRQ), and 179–192 (NDGH…DKNR). Residues 193 to 211 (SFNANSRQQDIGRQGQTQA) are compositionally biased toward polar residues. Composition is skewed to basic and acidic residues over residues 234-258 (ARQR…RQEA) and 266-276 (QTEDKKHREAP). Residues 277–287 (AKATEPAEPVA) show a composition bias toward low complexity. Residues 306 to 323 (NRPDKAHDRDHGLEDGQK) are compositionally biased toward basic and acidic residues. Low complexity predominate over residues 328 to 346 (SWNSQNQVRNQKNSNWNNN). The span at 347–357 (KKNKKGKHHKN) shows a compositional bias: basic residues. Positions 460 to 629 (ERAPVVTIMG…LLVAEVEELK (170 aa)) constitute a tr-type G domain. Residues 469–476 (GHVDHGKT) form a G1 region. 469–476 (GHVDHGKT) serves as a coordination point for GTP. Positions 494–498 (GITQH) are G2. The tract at residues 515–518 (DTPG) is G3. GTP-binding positions include 515 to 519 (DTPGH) and 569 to 572 (NKID). The tract at residues 569 to 572 (NKID) is G4. The interval 605–607 (SAK) is G5.

This sequence belongs to the TRAFAC class translation factor GTPase superfamily. Classic translation factor GTPase family. IF-2 subfamily.

Its subcellular location is the cytoplasm. Its function is as follows. One of the essential components for the initiation of protein synthesis. Protects formylmethionyl-tRNA from spontaneous hydrolysis and promotes its binding to the 30S ribosomal subunits. Also involved in the hydrolysis of GTP during the formation of the 70S ribosomal complex. This Streptococcus equi subsp. zooepidemicus (strain H70) protein is Translation initiation factor IF-2.